Here is a 398-residue protein sequence, read N- to C-terminus: 1-deoxy-D-xylulose 5-phosphate reductoisomerase (398 aa).

Threonine 10, glycine 11, serine 12, isoleucine 13, asparagine 38, and asparagine 124 together coordinate NADPH. Lysine 125 contacts 1-deoxy-D-xylulose 5-phosphate. An NADPH-binding site is contributed by glutamate 126. Aspartate 150 contributes to the Mn(2+) binding site. 4 residues coordinate 1-deoxy-D-xylulose 5-phosphate: serine 151, glutamate 152, serine 186, and histidine 209. Mn(2+) is bound at residue glutamate 152. Glycine 215 contacts NADPH. Serine 222, asparagine 227, lysine 228, and glutamate 231 together coordinate 1-deoxy-D-xylulose 5-phosphate. A Mn(2+)-binding site is contributed by glutamate 231.

This sequence belongs to the DXR family. Mg(2+) is required as a cofactor. Requires Mn(2+) as cofactor.

The catalysed reaction is 2-C-methyl-D-erythritol 4-phosphate + NADP(+) = 1-deoxy-D-xylulose 5-phosphate + NADPH + H(+). It functions in the pathway isoprenoid biosynthesis; isopentenyl diphosphate biosynthesis via DXP pathway; isopentenyl diphosphate from 1-deoxy-D-xylulose 5-phosphate: step 1/6. In terms of biological role, catalyzes the NADPH-dependent rearrangement and reduction of 1-deoxy-D-xylulose-5-phosphate (DXP) to 2-C-methyl-D-erythritol 4-phosphate (MEP). This chain is 1-deoxy-D-xylulose 5-phosphate reductoisomerase, found in Baumannia cicadellinicola subsp. Homalodisca coagulata.